The primary structure comprises 238 residues: Ribitol-5-phosphate cytidylyltransferase 1 (238 aa).

Residues Leu-7–Gly-10 and Gly-81–Thr-87 each bind CTP.

The protein belongs to the IspD/TarI cytidylyltransferase family. TarI subfamily.

It catalyses the reaction D-ribitol 5-phosphate + CTP + H(+) = CDP-L-ribitol + diphosphate. It participates in cell wall biogenesis; poly(ribitol phosphate) teichoic acid biosynthesis. Its function is as follows. Catalyzes the transfer of the cytidylyl group of CTP to D-ribitol 5-phosphate. The chain is Ribitol-5-phosphate cytidylyltransferase 1 from Staphylococcus aureus (strain bovine RF122 / ET3-1).